Reading from the N-terminus, the 225-residue chain is Ribonuclease HII (225 aa).

Residues 2 to 210 (GIVVGVDEAG…VRKLGGPWRS (209 aa)) form the RNase H type-2 domain. Positions 8, 9, and 107 each coordinate a divalent metal cation.

This sequence belongs to the RNase HII family. Mn(2+) serves as cofactor. Mg(2+) is required as a cofactor.

The protein localises to the cytoplasm. The catalysed reaction is Endonucleolytic cleavage to 5'-phosphomonoester.. Its function is as follows. Endonuclease that specifically degrades the RNA of RNA-DNA hybrids. The polypeptide is Ribonuclease HII (rnhB) (Aeropyrum pernix (strain ATCC 700893 / DSM 11879 / JCM 9820 / NBRC 100138 / K1)).